Consider the following 325-residue polypeptide: Putative S-adenosyl-L-methionine-dependent methyltransferase MT0917 (325 aa).

S-adenosyl-L-methionine is bound by residues D126 and 155-156 (DL).

It belongs to the UPF0677 family.

Its function is as follows. Exhibits S-adenosyl-L-methionine-dependent methyltransferase activity. This is Putative S-adenosyl-L-methionine-dependent methyltransferase MT0917 from Mycobacterium tuberculosis (strain CDC 1551 / Oshkosh).